Reading from the N-terminus, the 104-residue chain is Large ribosomal subunit protein uL24 (104 aa).

The protein belongs to the universal ribosomal protein uL24 family. As to quaternary structure, part of the 50S ribosomal subunit.

In terms of biological role, one of two assembly initiator proteins, it binds directly to the 5'-end of the 23S rRNA, where it nucleates assembly of the 50S subunit. Functionally, one of the proteins that surrounds the polypeptide exit tunnel on the outside of the subunit. The chain is Large ribosomal subunit protein uL24 from Buchnera aphidicola subsp. Acyrthosiphon pisum (strain 5A).